The following is a 311-amino-acid chain: Probable manganese-dependent inorganic pyrophosphatase (311 aa).

Mn(2+)-binding residues include H9, D13, D15, D77, H99, and D151.

This sequence belongs to the PPase class C family. Requires Mn(2+) as cofactor.

The protein localises to the cytoplasm. The catalysed reaction is diphosphate + H2O = 2 phosphate + H(+). The polypeptide is Probable manganese-dependent inorganic pyrophosphatase (Streptococcus equi subsp. equi (strain 4047)).